Reading from the N-terminus, the 312-residue chain is tRNA uridine(34) hydroxylase (312 aa).

A Rhodanese domain is found at 130 to 225 (RGDEVVFFDG…YGEQFGNKGL (96 aa)). The active-site Cysteine persulfide intermediate is the Cys-185.

The protein belongs to the TrhO family.

It catalyses the reaction uridine(34) in tRNA + AH2 + O2 = 5-hydroxyuridine(34) in tRNA + A + H2O. Functionally, catalyzes oxygen-dependent 5-hydroxyuridine (ho5U) modification at position 34 in tRNAs. The protein is tRNA uridine(34) hydroxylase of Corynebacterium glutamicum (strain R).